The primary structure comprises 470 residues: Uronate isomerase (470 aa).

This sequence belongs to the metallo-dependent hydrolases superfamily. Uronate isomerase family.

It catalyses the reaction D-glucuronate = D-fructuronate. The catalysed reaction is aldehydo-D-galacturonate = keto-D-tagaturonate. Its pathway is carbohydrate metabolism; pentose and glucuronate interconversion. The polypeptide is Uronate isomerase (Shigella boydii serotype 4 (strain Sb227)).